The primary structure comprises 501 residues: Aspartyl/glutamyl-tRNA(Asn/Gln) amidotransferase subunit B (501 aa).

The disordered stretch occupies residues 272–291; sequence QETRHYQETDGTTSKGRPKE.

The protein belongs to the GatB/GatE family. GatB subfamily. As to quaternary structure, heterotrimer of A, B and C subunits.

The enzyme catalyses L-glutamyl-tRNA(Gln) + L-glutamine + ATP + H2O = L-glutaminyl-tRNA(Gln) + L-glutamate + ADP + phosphate + H(+). It carries out the reaction L-aspartyl-tRNA(Asn) + L-glutamine + ATP + H2O = L-asparaginyl-tRNA(Asn) + L-glutamate + ADP + phosphate + 2 H(+). In terms of biological role, allows the formation of correctly charged Asn-tRNA(Asn) or Gln-tRNA(Gln) through the transamidation of misacylated Asp-tRNA(Asn) or Glu-tRNA(Gln) in organisms which lack either or both of asparaginyl-tRNA or glutaminyl-tRNA synthetases. The reaction takes place in the presence of glutamine and ATP through an activated phospho-Asp-tRNA(Asn) or phospho-Glu-tRNA(Gln). The sequence is that of Aspartyl/glutamyl-tRNA(Asn/Gln) amidotransferase subunit B from Corynebacterium efficiens (strain DSM 44549 / YS-314 / AJ 12310 / JCM 11189 / NBRC 100395).